Reading from the N-terminus, the 483-residue chain is MRFVVRLFPEISIKSAPVRKRWTKMLTDNLRLMAKRIHPTARVNKEWDRIEVTAKVDDPVVEGQLIDMLARTPGIANFSHVQTHPFESLHDIYELVQASWGDQLKGKTFCVRVKRTGNHDFTSTEVERYVGGGLNQNNPTGGVKLKDPDVSIGLEVKDDQVYLVTKKYQGLGGFPMGTQESVLSLISGGYDSTVASFQMIKRGLRTHYCFFNLGGREHELAVKEIAFFLWNRFGSTHRVRFISVPFEGVVGEILQKVGPSNMGVVLKRMMLRAGERIAERGGIEAMVTGEAVAQVSSQTIPNLSVIDSVTDMMVLRPLIVMDKRDIIDISRKIGAEEFSAAVPEYCGVISVKPSAKVNRAKLEAEEEKFDFSILEHALENAVVQSIDEVMDDAQELAEVELVSELPVSAKVIDIRHHTEQELRPLTVEGREVLEIPFYQLSTAYAELDKAVNYYLFCDKGVMSGLHARHLLDAGYTNVGVYRP.

The THUMP domain maps to 63–167; sequence GQLIDMLART…DDQVYLVTKK (105 aa). Residues 185 to 186, Lys-267, Gly-289, and Gln-298 contribute to the ATP site; that span reads LI. A disulfide bond links Cys-346 and Cys-457. The region spanning 405–483 is the Rhodanese domain; the sequence is LPVSAKVIDI…GYTNVGVYRP (79 aa). Cys-457 acts as the Cysteine persulfide intermediate in catalysis.

The protein belongs to the ThiI family.

The protein resides in the cytoplasm. It carries out the reaction [ThiI sulfur-carrier protein]-S-sulfanyl-L-cysteine + a uridine in tRNA + 2 reduced [2Fe-2S]-[ferredoxin] + ATP + H(+) = [ThiI sulfur-carrier protein]-L-cysteine + a 4-thiouridine in tRNA + 2 oxidized [2Fe-2S]-[ferredoxin] + AMP + diphosphate. It catalyses the reaction [ThiS sulfur-carrier protein]-C-terminal Gly-Gly-AMP + S-sulfanyl-L-cysteinyl-[cysteine desulfurase] + AH2 = [ThiS sulfur-carrier protein]-C-terminal-Gly-aminoethanethioate + L-cysteinyl-[cysteine desulfurase] + A + AMP + 2 H(+). It participates in cofactor biosynthesis; thiamine diphosphate biosynthesis. Functionally, catalyzes the ATP-dependent transfer of a sulfur to tRNA to produce 4-thiouridine in position 8 of tRNAs, which functions as a near-UV photosensor. Also catalyzes the transfer of sulfur to the sulfur carrier protein ThiS, forming ThiS-thiocarboxylate. This is a step in the synthesis of thiazole, in the thiamine biosynthesis pathway. The sulfur is donated as persulfide by IscS. In Saccharophagus degradans (strain 2-40 / ATCC 43961 / DSM 17024), this protein is tRNA sulfurtransferase.